Consider the following 247-residue polypeptide: Bidirectional sugar transporter SWEET1 (247 aa).

Residues 1–6 (MNIAHT) lie on the Extracellular side of the membrane. Residues 7-27 (IFGVFGNATALFLFLAPSITF) traverse the membrane as a helical segment. The 88-residue stretch at 7–94 (IFGVFGNATA…LIFLFYAPKK (88 aa)) folds into the MtN3/slv 1 domain. At 28-41 (KRIIKNKSTEQFSG) the chain is on the cytoplasmic side. Residues 42–62 (IPYPMTLLNCLLSAWYGLPFV) traverse the membrane as a helical segment. Over 63–71 (SKDNTLVST) the chain is Extracellular. The helical transmembrane segment at 72–92 (INGTGAVIETVYVLIFLFYAP) threads the bilayer. The Cytoplasmic segment spans residues 93–98 (KKEKIK). A helical transmembrane segment spans residues 99–119 (IFGIFSCVLAVFATVALVSLF). At 120-127 (ALQGNGRK) the chain is on the extracellular side. The chain crosses the membrane as a helical span at residues 128-148 (LFCGLAATVFSIIMYASPLSI). One can recognise a MtN3/slv 2 domain in the interval 130–213 (CGLAATVFSI…ILYFIYCGNK (84 aa)). Residues 149–162 (MRLVVKTKSVEFMP) lie on the Cytoplasmic side of the membrane. Residues 163–183 (FFLSLFVFLCGTSWFVYGLIG) form a helical membrane-spanning segment. Residues 184 to 187 (RDPF) lie on the Extracellular side of the membrane. A helical membrane pass occupies residues 188 to 208 (VAIPNGFGCALGTLQLILYFI). The Cytoplasmic segment spans residues 209–247 (YCGNKGEKSADAQKDEKSVEMKDDEKKQNVVNGKQDLQV). Over residues 221–236 (QKDEKSVEMKDDEKKQ) the composition is skewed to basic and acidic residues. The disordered stretch occupies residues 221-247 (QKDEKSVEMKDDEKKQNVVNGKQDLQV). A compositionally biased stretch (polar residues) spans 237–247 (NVVNGKQDLQV).

It belongs to the SWEET sugar transporter family. In terms of assembly, forms homooligomers and heterooligomers with SWEET9, SWEET11, SWEET13, SWEET15, SWEET16 and SWEET17. In terms of tissue distribution, mainly expressed in flowers.

It localises to the cell membrane. Its subcellular location is the endoplasmic reticulum membrane. Mediates both low-affinity uptake and efflux of sugar across the plasma membrane. Can transport glucose, and, to a lower extent, mannose, fructose and galactose. In Arabidopsis thaliana (Mouse-ear cress), this protein is Bidirectional sugar transporter SWEET1.